Consider the following 332-residue polypeptide: Adenosine deaminase (332 aa).

2 residues coordinate Zn(2+): histidine 12 and histidine 14. Substrate-binding residues include histidine 14, aspartate 16, and glycine 170. Histidine 197 serves as a coordination point for Zn(2+). Catalysis depends on glutamate 200, which acts as the Proton donor. Aspartate 278 is a binding site for Zn(2+). Aspartate 279 lines the substrate pocket.

It belongs to the metallo-dependent hydrolases superfamily. Adenosine and AMP deaminases family. Adenosine deaminase subfamily. Zn(2+) serves as cofactor.

The catalysed reaction is adenosine + H2O + H(+) = inosine + NH4(+). It catalyses the reaction 2'-deoxyadenosine + H2O + H(+) = 2'-deoxyinosine + NH4(+). Functionally, catalyzes the hydrolytic deamination of adenosine and 2-deoxyadenosine. In Erwinia tasmaniensis (strain DSM 17950 / CFBP 7177 / CIP 109463 / NCPPB 4357 / Et1/99), this protein is Adenosine deaminase.